A 1163-amino-acid polypeptide reads, in one-letter code: Actin cross-linking toxin VgrG1 (1163 aa).

In terms of domain architecture, ACD spans 728-1163 (TPDFPTHFPK…NPQEWQRIIA (436 aa)). An ATP-binding site is contributed by 739–743 (SIGIE). Residues Glu-743 and Glu-805 each coordinate Mg(2+). Ser-808 contacts ATP. Gln-889 contacts Mg(2+). Arg-995 contacts ATP. Mg(2+) is bound at residue Glu-1066.

It belongs to the VgrG protein family. Interacts with protein VC1417. Mg(2+) is required as a cofactor.

It localises to the secreted. The protein resides in the host cytoplasm. It is found in the host cytosol. Its function is as follows. Part of the type VI secretion system (T6SS) specialized secretion system, which delivers several virulence factors in both prokaryotic and eukaryotic cells during infection. Forms the spike at the tip of the elongating tube probably formed by hemolysin co-regulated protein/Hcp. Allows the delivery of the TseL antibacterial toxin to target cells where it exerts its toxicity. Also acts directly as an actin-directed toxin that catalyzes the covalent cross-linking of host cytoplasmic monomeric actin. Mediates the cross-link between 'Lys-50' of one monomer and 'Glu-270' of another actin monomer, resulting in formation of highly toxic actin oligomers that cause cell rounding. The toxin can be highly efficient at very low concentrations by acting on formin homology family proteins: toxic actin oligomers bind with high affinity to formins and adversely affect both nucleation and elongation abilities of formins, causing their potent inhibition in both profilin-dependent and independent manners. Acts as an acid--amino-acid ligase that transfers the gamma-phosphoryl group of ATP to the 'Glu-270' actin residue, resulting in the formation of an activated acyl phosphate intermediate. This intermediate is further hydrolyzed and the energy of hydrolysis is utilized for the formation of the amide bond between actin subunits. The protein is Actin cross-linking toxin VgrG1 of Vibrio cholerae serotype O1 (strain ATCC 39315 / El Tor Inaba N16961).